The chain runs to 360 residues: Methylthioribose-1-phosphate isomerase (360 aa).

Catalysis depends on aspartate 252, which acts as the Proton donor.

This sequence belongs to the eIF-2B alpha/beta/delta subunits family. MtnA subfamily.

The protein resides in the cytoplasm. The protein localises to the nucleus. It carries out the reaction 5-(methylsulfanyl)-alpha-D-ribose 1-phosphate = 5-(methylsulfanyl)-D-ribulose 1-phosphate. Its pathway is amino-acid biosynthesis; L-methionine biosynthesis via salvage pathway; L-methionine from S-methyl-5-thio-alpha-D-ribose 1-phosphate: step 1/6. In terms of biological role, catalyzes the interconversion of methylthioribose-1-phosphate (MTR-1-P) into methylthioribulose-1-phosphate (MTRu-1-P). This chain is Methylthioribose-1-phosphate isomerase, found in Trichoplax adhaerens (Trichoplax reptans).